Here is a 164-residue protein sequence, read N- to C-terminus: Putative pre-16S rRNA nuclease (164 aa).

The protein belongs to the YqgF nuclease family.

The protein localises to the cytoplasm. Its function is as follows. Could be a nuclease involved in processing of the 5'-end of pre-16S rRNA. The protein is Putative pre-16S rRNA nuclease of Rhizobium johnstonii (strain DSM 114642 / LMG 32736 / 3841) (Rhizobium leguminosarum bv. viciae).